Reading from the N-terminus, the 1258-residue chain is MARDVDNKQNAKRISRDEDEDEFAGESMVGRTLDNPFLGEDEFEDIFGSESQYISSSGQNSTNPFLADTRIENSPLGSESKANQLNKQGTNVNHIEIPLRDFNDPTQPESFLPPPKNTFTSRIKKIKNLFKKEKKQVKPEDLGPRQIILNDYSANHFLHNAVSTCKYSAFTFLPKFLKEQFSKYANLFFLFTAVVQQIPGITPVNRYTTIGPMLIVLSVSGIKEIMEDIKRKKQDQELNESPCYVLQGTGFVEKQWKDVVVGDIVKIVSETFFPADLVLLSSSEPEGLCYIETANLDGETNLKIKQALPETAGLLKPVELGQLSGEVKSEQPNNNLYTFDATLKLLPSDRELPLSPDQLLLRGAQLRNTPWVYGIVVFTGHESKLMKNTTETPIKRTSVEKQVNSQILFLLCIFVFLCFASSLGALIHRSVYGSALSYVKYTSNRAGMFFKGLLTFWILYSNLVPISLFVTFELVRYIQAQLISSDLDMYNEETDTPAACRTSSLVEELGQVGYIFSDKTGTLTRNQMEFRQCTIAGVAYADVIPEDRQFTSEDLDSDMYIYDFDTLKENLKHSENASLIHQFLLVLSICHTVIPEYDESTNSIKYQASSPDEGALVKGAASIGYKFLARKPHLVTVSIFGKDESYELLHICEFNSTRKRMSIVFRCPDGKIRLYVKGADTVIMERLASDNPYLQTTIHHLEDYATVGLRTLCIAMREVPEDEYQRWSTVFETAASSLVDRAQKLMDAAEEIEKDLILLGATAIEDRLQDGVPDTISTLQTAGIKIWVLTGDRQETAINIGMSCKLIDEDMGLVIVNEETKEATAESVMAKLSSIYRNEATTGNVESMALVIDGVSLTYALDFSLERRFFELASLCRAVICCRVSPLQKALIVKMVKRNTGEVLLAIGDGANDVPMIQAAHVGVGISGMEGLQAVRSSDFSISQFCYLKKLLLVHGSWCYQRLSKLILYSFYKNIALYMTQFWYAFCNAFSGQVIFESWSISLYNVLFTVLPPVVIGIFDQFVSAGQLFQYPQLYQLGQRSEFFNLKRFWSWITNGFYHSLLLFLCSIAVFYYDGPNKDGLASGHWVWGTTLYAAILATVLGKAALISNHWTQYTVIATLGSFLLWIVFMPIYAVAAPAIGFSKEYYGIIPHLYGNLKFWASLLVLPTIALMRDFVWKYSSRMYYPEEYHYVQEIQKYNVTDYRPRIVGFHKAIRKIRQMQRMRKQRGYAFSQGEEDQSRILDAYDTTHTRGAYGEMR.

Disordered stretches follow at residues 1-41 (MARD…LGED) and 53-83 (YISSSGQNSTNPFLADTRIENSPLGSESKAN). Over 1 to 183 (MARDVDNKQN…PKFLKEQFSK (183 aa)) the chain is Cytoplasmic. Polar residues predominate over residues 53–64 (YISSSGQNSTNP). A helical membrane pass occupies residues 184–204 (YANLFFLFTAVVQQIPGITPV). The Lumenal segment spans residues 205-208 (NRYT). Residues 209–229 (TIGPMLIVLSVSGIKEIMEDI) traverse the membrane as a helical segment. The Cytoplasmic portion of the chain corresponds to 230-406 (KRKKQDQELN…TSVEKQVNSQ (177 aa)). The helical transmembrane segment at 407–427 (ILFLLCIFVFLCFASSLGALI) threads the bilayer. Over 428-451 (HRSVYGSALSYVKYTSNRAGMFFK) the chain is Lumenal. A helical transmembrane segment spans residues 452–472 (GLLTFWILYSNLVPISLFVTF). Topologically, residues 473–974 (ELVRYIQAQL…KLILYSFYKN (502 aa)) are cytoplasmic. Aspartate 518 functions as the 4-aspartylphosphate intermediate in the catalytic mechanism. ATP-binding residues include aspartate 518, lysine 519, threonine 520, glutamate 613, phenylalanine 654, serine 656, lysine 659, lysine 677, arginine 710, threonine 711, threonine 790, glycine 791, aspartate 792, arginine 883, and lysine 889. Mg(2+) is bound at residue aspartate 518. Position 520 (threonine 520) interacts with Mg(2+). Aspartate 909 is a binding site for Mg(2+). ATP is bound by residues asparagine 912 and aspartate 913. Aspartate 913 contributes to the Mg(2+) binding site. Residues 975 to 995 (IALYMTQFWYAFCNAFSGQVI) form a helical membrane-spanning segment. The Lumenal portion of the chain corresponds to 996–998 (FES). The helical transmembrane segment at 999-1019 (WSISLYNVLFTVLPPVVIGIF) threads the bilayer. The Cytoplasmic segment spans residues 1020–1051 (DQFVSAGQLFQYPQLYQLGQRSEFFNLKRFWS). A helical transmembrane segment spans residues 1052-1072 (WITNGFYHSLLLFLCSIAVFY). Residues 1073-1086 (YDGPNKDGLASGHW) lie on the Lumenal side of the membrane. The chain crosses the membrane as a helical span at residues 1087-1107 (VWGTTLYAAILATVLGKAALI). Lysine 1103 contributes to the a 1,2-diacyl-sn-glycero-3-phospho-(1D-myo-inositol 4-phosphate) binding site. Topologically, residues 1108-1115 (SNHWTQYT) are cytoplasmic. A helical transmembrane segment spans residues 1116 to 1136 (VIATLGSFLLWIVFMPIYAVA). The Lumenal portion of the chain corresponds to 1137–1148 (APAIGFSKEYYG). A helical transmembrane segment spans residues 1149–1169 (IIPHLYGNLKFWASLLVLPTI). The Cytoplasmic segment spans residues 1170–1258 (ALMRDFVWKY…HTRGAYGEMR (89 aa)). A 1,2-diacyl-sn-glycero-3-phospho-(1D-myo-inositol 4-phosphate)-binding residues include arginine 1173, tryptophan 1177, lysine 1178, tyrosine 1189, and histidine 1190.

This sequence belongs to the cation transport ATPase (P-type) (TC 3.A.3) family. Type IV subfamily. The cofactor is Mg(2+).

Its subcellular location is the endoplasmic reticulum membrane. It localises to the golgi apparatus. The protein localises to the trans-Golgi network membrane. The enzyme catalyses ATP + H2O + phospholipidSide 1 = ADP + phosphate + phospholipidSide 2.. It carries out the reaction a 1,2-diacyl-sn-glycero-3-phospho-L-serine(out) + ATP + H2O = a 1,2-diacyl-sn-glycero-3-phospho-L-serine(in) + ADP + phosphate + H(+). The catalysed reaction is a 1,2-diacyl-sn-glycero-3-phosphoethanolamine(out) + ATP + H2O = a 1,2-diacyl-sn-glycero-3-phosphoethanolamine(in) + ADP + phosphate + H(+). Its function is as follows. Catalytic component of a P4-ATPase flippase complex which catalyzes the hydrolysis of ATP coupled to the transport of phosphatidylserine and small amounts of ethanolamine from the lumen to the cytosolic leaflet of the trans-Golgi network and ensures the maintenance of asymmetric distribution of phospholipids. The polypeptide is Phospholipid-transporting ATPase C887.12 (Schizosaccharomyces pombe (strain 972 / ATCC 24843) (Fission yeast)).